A 468-amino-acid chain; its full sequence is Putative magnesium transporter MRS2-G (468 aa).

Disordered stretches follow at residues 1 to 76 and 182 to 205; these read MGRR…AGKV and NGQP…VPRL. Composition is skewed to low complexity over residues 14-23 and 31-45; these read ASNASTSSST and RLPS…SSPS. Residues 46–67 show a composition bias toward pro residues; that stretch reads PASPSPPPPSASHPAPPSPPLA. Over residues 187-197 the composition is skewed to basic and acidic residues; that stretch reads GDDHGEKHDDS. 2 consecutive transmembrane segments (helical) span residues 402–422 and 437–457; these read LTLT…GAFA and FFWP…IVLL.

The protein belongs to the CorA metal ion transporter (MIT) (TC 1.A.35.5) family.

It localises to the membrane. Its function is as follows. Putative magnesium transporter. The polypeptide is Putative magnesium transporter MRS2-G (MRS2-G) (Oryza sativa subsp. indica (Rice)).